A 452-amino-acid chain; its full sequence is Cobyrinate a,c-diamide synthase (452 aa).

Residues 244 to 429 form the GATase cobBQ-type domain; sequence RIAVARDRAF…LHLHWGTQAW (186 aa). Cys-325 functions as the Nucleophile in the catalytic mechanism.

This sequence belongs to the CobB/CbiA family. Mg(2+) is required as a cofactor.

It catalyses the reaction cob(II)yrinate + 2 L-glutamine + 2 ATP + 2 H2O = cob(II)yrinate a,c diamide + 2 L-glutamate + 2 ADP + 2 phosphate + 2 H(+). It participates in cofactor biosynthesis; adenosylcobalamin biosynthesis; cob(II)yrinate a,c-diamide from sirohydrochlorin (anaerobic route): step 10/10. Catalyzes the ATP-dependent amidation of the two carboxylate groups at positions a and c of cobyrinate, using either L-glutamine or ammonia as the nitrogen source. The sequence is that of Cobyrinate a,c-diamide synthase from Gloeobacter violaceus (strain ATCC 29082 / PCC 7421).